The following is a 500-amino-acid chain: Glucose-1-phosphate adenylyltransferase small subunit 1, chloroplastic/amyloplastic (500 aa).

A chloroplast-targeting transit peptide spans 1–50 (MAMMAMGAASWAPIPAPARAAAAFYPGRDLAAARRRRGAAARRPFVFTPR).

The protein belongs to the bacterial/plant glucose-1-phosphate adenylyltransferase family. As to quaternary structure, heterotetramer composed of two small and two large subunits. In terms of tissue distribution, expressed in leaves.

Its subcellular location is the plastid. The protein localises to the chloroplast. The protein resides in the amyloplast. The catalysed reaction is alpha-D-glucose 1-phosphate + ATP + H(+) = ADP-alpha-D-glucose + diphosphate. The protein operates within glycan biosynthesis; starch biosynthesis. With respect to regulation, activated by 3'phosphoglycerate, inhibited by orthophosphate. Allosteric regulation. In terms of biological role, involved in synthesis of starch. Catalyzes the synthesis of ADP-glucose, a molecule that serves as an activated glycosyl donor for alpha-1,4-glucan synthesis. Essential for starch synthesis in leaf chloroplasts and endosperm amyloplasts. The chain is Glucose-1-phosphate adenylyltransferase small subunit 1, chloroplastic/amyloplastic from Oryza sativa subsp. japonica (Rice).